Consider the following 175-residue polypeptide: Sec-independent protein translocase protein TatB (175 aa).

A helical transmembrane segment spans residues 1-21 (MLDLGLSKMALIGVVALVVLG). 2 disordered regions span residues 96 to 115 (VSPG…AASG) and 153 to 175 (VQSG…ARFL). The span at 160–175 (VARHRPASLRRPARFL) shows a compositional bias: basic residues.

The protein belongs to the TatB family. In terms of assembly, the Tat system comprises two distinct complexes: a TatABC complex, containing multiple copies of TatA, TatB and TatC subunits, and a separate TatA complex, containing only TatA subunits. Substrates initially bind to the TatABC complex, which probably triggers association of the separate TatA complex to form the active translocon.

The protein resides in the cell inner membrane. Its function is as follows. Part of the twin-arginine translocation (Tat) system that transports large folded proteins containing a characteristic twin-arginine motif in their signal peptide across membranes. Together with TatC, TatB is part of a receptor directly interacting with Tat signal peptides. TatB may form an oligomeric binding site that transiently accommodates folded Tat precursor proteins before their translocation. This chain is Sec-independent protein translocase protein TatB, found in Burkholderia mallei (strain ATCC 23344).